The chain runs to 453 residues: Charged multivesicular body protein 7 (453 aa).

The segment at M1 to P22 is disordered. Low complexity predominate over residues A10–P22. S232 is subject to Phosphoserine. Positions Q243–I312 form a coiled coil. The span at T392–R403 shows a compositional bias: basic and acidic residues. Disordered stretches follow at residues T392–S417 and S431–L453. T408 is modified (phosphothreonine). Phosphoserine occurs at positions 410, 417, 431, and 441.

The protein belongs to the SNF7 family. Interacts with CHMP4B, but not with VPS25. Interacts with LEMD2 (via C-terminus).

Its subcellular location is the cytoplasm. It localises to the nucleus envelope. ESCRT-III-like protein required to recruit the ESCRT-III complex to the nuclear envelope (NE) during late anaphase. Together with SPAST, the ESCRT-III complex promotes NE sealing and mitotic spindle disassembly during late anaphase. Recruited to the reforming NE during anaphase by LEMD2. Plays a role in the endosomal sorting pathway. This Homo sapiens (Human) protein is Charged multivesicular body protein 7 (CHMP7).